The chain runs to 574 residues: Choline transporter-like protein ctl1 (574 aa).

N-linked (GlcNAc...) asparagine glycosylation is found at Asn40 and Asn101. Helical transmembrane passes span 144-164 (WGLT…LMVW), 189-209 (KDAI…VAIP), 211-231 (FLYF…VYLL), 246-266 (LMLL…YYVW), 291-311 (QITL…FIWV), 336-356 (WVLA…FHAL), 396-416 (YGLC…LHFL), and 434-456 (TSAS…VPYM). N-linked (GlcNAc...) asparagine glycosylation occurs at Asn457. The next 2 helical transmembrane spans lie at 485-505 (LLAA…NYSI) and 511-531 (FYGY…IGAI). Residue Asn558 is glycosylated (N-linked (GlcNAc...) asparagine).

This sequence belongs to the CTL (choline transporter-like) family. As to quaternary structure, interacts with atg9.

The protein localises to the endoplasmic reticulum membrane. The protein resides in the preautophagosomal structure membrane. Functionally, required for the normal organization of the preautophagosomal structure (PAS) and for the correct subcellular location of atg9. The chain is Choline transporter-like protein ctl1 (ctl1) from Schizosaccharomyces pombe (strain 972 / ATCC 24843) (Fission yeast).